Here is a 124-residue protein sequence, read N- to C-terminus: ATP synthase epsilon chain (124 aa).

This sequence belongs to the ATPase epsilon chain family. In terms of assembly, F-type ATPases have 2 components, CF(1) - the catalytic core - and CF(0) - the membrane proton channel. CF(1) has five subunits: alpha(3), beta(3), gamma(1), delta(1), epsilon(1). CF(0) has three main subunits: a, b and c.

The protein resides in the cell membrane. Functionally, produces ATP from ADP in the presence of a proton gradient across the membrane. This Streptomyces griseus subsp. griseus (strain JCM 4626 / CBS 651.72 / NBRC 13350 / KCC S-0626 / ISP 5235) protein is ATP synthase epsilon chain.